A 91-amino-acid chain; its full sequence is Islet amyloid polypeptide (91 aa).

The N-terminal stretch at 1-22 (MGILKLPVVLIVLCVALNHLEG) is a signal peptide. Residues 23–33 (GGKPTESHQME) constitute a propeptide that is removed on maturation. A disulfide bond links cysteine 37 and cysteine 42. The residue at position 72 (tyrosine 72) is a Tyrosine amide. The propeptide occupies 78-91 (VEILKREPLSYLPI).

The protein belongs to the calcitonin family. In terms of assembly, can form homodimers. Interacts with IDE and INS. Interaction with INS inhibits homodimerization and fibril formation.

It localises to the secreted. Functionally, amylin/IAPP is a glucoregulatory peptide hormone that plays an important role in the regulation of energy homeostasis. Selectively inhibits insulin-stimulated glucose utilization and glycogen deposition in muscle, while not affecting adipocyte glucose metabolism. IAPP function is mediated by the CALCR-RAMPs (AMYRs) receptor complexes. Amylin can also bind CALCR receptor in the absence of RAMPs, although it is more selective for AMYRs. This is Islet amyloid polypeptide (IAPP) from Bos taurus (Bovine).